Reading from the N-terminus, the 88-residue chain is Actobindin (88 aa).

The residue at position 1 (methionine 1) is an N-acetylmethionine. Residues 1–22 (MNPELQSAIGQGAALKHAETVD) form a disordered region. Lysine 35 bears the N6,N6,N6-trimethyllysine mark. One can recognise a WH2 domain in the interval 37–54 (DRSSFLEEVAKPHELKHA). Residue lysine 72 is modified to N6,N6,N6-trimethyllysine.

As to quaternary structure, monomer.

Is able to bind two actin monomers at high concentrations of G-actin. The sequence is that of Actobindin from Acanthamoeba castellanii (Amoeba).